We begin with the raw amino-acid sequence, 727 residues long: MDKKECGFSIDDFLYAVEGGNTISKWWPHRLNLKILQQNNPDLVPFDKNFNYREEFSKLDYFELKEDIRRIMRESQEWWPADYGHYGPLFIRMAWHSAGTYRIIDGKGGANGGNQRFAPVNSWPDNVNLDRARRLLWPVKKKYGNKISWADLMILAGNVALEDMGFKTIGFGGGREDIWEPEIDTYWGPETEWLADMRHSEEGKIKGPLAAVQMGLIYVNPEGPNGEPDVLGAAKDIKESFGKMGMSIEETVALIAGGHTFGKCHGAADPSKYLGPEPEAAPIEQQGLGWKNSYGTGKGKDTITSGLEGAWTPTPIKWDNSFLRILFKYEWNLQKSPAGAWQWVAVNPDREDLVPDAHIPGKYHPPIMLTTDLALKLDPELSEVSKRFLEDPEYFRDAFAKAWFKLTHRDLGPKWRYLGPEVPEEDFIWQDPIPEINYQLIDQDDIKNLKEKILKSDATVTELVYTAWSAASTFRKSDRRGGVNGGRIALEPQISWEVNKTHVPKVLKILNEIKEDFNKQSSDKKVSLADLIVLAGCAAVEEAIKRAGFDIQVPFRPGRNDTTQELTDIKSFSFLEPVADGFRNYIKPECDIPEEYLLIDKADQLNLTVPQMCVLVGGLRVLGANYDSTDYGVFTDNVGTLSNDFFVNLLDMSIVWKPVRVNNRDIFEGYDRKTGDLVYRGTRVDLIFGSNSELRAQAEFYAQDDNREKFIRDFVEAWDKVMNLDIT.

The segment at residues 95 to 218 is a cross-link (tryptophyl-tyrosyl-methioninium (Trp-Tyr) (with M-244)); it reads WHSAGTYRII…LAAVQMGLIY (124 aa). The Proton acceptor role is filled by His96. Residues 218–244 constitute a cross-link (tryptophyl-tyrosyl-methioninium (Tyr-Met) (with W-95)); sequence YVNPEGPNGEPDVLGAAKDIKESFGKM. Residue His259 participates in heme b binding.

Belongs to the peroxidase family. Peroxidase/catalase subfamily. Homodimer or homotetramer. Heme b is required as a cofactor. In terms of processing, formation of the three residue Trp-Tyr-Met cross-link is important for the catalase, but not the peroxidase activity of the enzyme.

The enzyme catalyses H2O2 + AH2 = A + 2 H2O. The catalysed reaction is 2 H2O2 = O2 + 2 H2O. In terms of biological role, bifunctional enzyme with both catalase and broad-spectrum peroxidase activity. The protein is Catalase-peroxidase of Persephonella marina (strain DSM 14350 / EX-H1).